The following is a 389-amino-acid chain: Cytochrome b (389 aa).

Helical transmembrane passes span 32-52, 76-98, 113-133, and 179-199; these read FGSLLGICLVLQILTGCFLAM, WIVRYTHANVASFFFIFVYAHIG, LWSIGVIILVLMMAIGFLGYV, and FFSLHYILPFVLAALVVAHFM. Positions 82 and 96 each coordinate heme b. Residues His183 and His197 each coordinate heme b. Residue His202 coordinates a ubiquinone. 4 helical membrane-spanning segments follow: residues 225–245, 289–309, 321–341, and 348–368; these read FIFKDLVTIFAFFWILSVIVF, LLGVVAMFGSLLILLVLPLTD, AMKFFFWFFVVNFIMLFWLGS, and YLEIGQLSTTFYFSFFLVIVP.

This sequence belongs to the cytochrome b family. Fungal cytochrome b-c1 complex contains 10 subunits; 3 respiratory subunits, 2 core proteins and 5 low-molecular weight proteins. Cytochrome b-c1 complex is a homodimer. The cofactor is heme b.

It localises to the mitochondrion inner membrane. In terms of biological role, component of the ubiquinol-cytochrome c reductase complex (complex III or cytochrome b-c1 complex) that is part of the mitochondrial respiratory chain. The b-c1 complex mediates electron transfer from ubiquinol to cytochrome c. Contributes to the generation of a proton gradient across the mitochondrial membrane that is then used for ATP synthesis. This Strobilurus tenacellus protein is Cytochrome b (COB).